We begin with the raw amino-acid sequence, 864 residues long: Disintegrin and metalloproteinase domain-containing protein 15 (864 aa).

Residues 1 to 17 form the signal peptide; the sequence is MRLALLWALGLLGAGSP. The disordered stretch occupies residues 17 to 49; sequence PRPSPPLPNIGGTEEEQQASPERTQSRSLENQV. Residues 18 to 208 constitute a propeptide that is removed on maturation; that stretch reads RPSPPLPNIG…EQHHLRRLKR (191 aa). Polar residues predominate over residues 34-49; the sequence is QASPERTQSRSLENQV. An N-linked (GlcNAc...) asparagine glycan is attached at asparagine 57. The Cysteine switch signature appears at 178 to 185; that stretch reads HTCAPSWH. Cysteine 180 lines the Zn(2+) pocket. Over 209-698 the chain is Extracellular; sequence DVVTETKIVE…QLRATSSLTT (490 aa). The region spanning 215–416 is the Peptidase M12B domain; sequence KIVELVIVAD…GMGSCLFEWP (202 aa). N-linked (GlcNAc...) asparagine glycosylation occurs at asparagine 239. Disulfide bonds link cysteine 325–cysteine 411, cysteine 367–cysteine 395, cysteine 369–cysteine 378, and cysteine 482–cysteine 502. Residue histidine 350 participates in Zn(2+) binding. Glutamate 351 is a catalytic residue. Positions 354 and 360 each coordinate Zn(2+). N-linked (GlcNAc...) asparagine glycosylation is found at asparagine 391 and asparagine 394. A Disintegrin domain is found at 423–510; it reads SSLCGNMFVD…QCPPDIRLGD (88 aa). N-linked (GlcNAc...) asparagine glycosylation is found at asparagine 608 and asparagine 613. Cystine bridges form between cysteine 659–cysteine 669, cysteine 663–cysteine 675, and cysteine 677–cysteine 686. The 29-residue stretch at 659 to 687 folds into the EGF-like domain; that stretch reads CRSKCHGHGVCDSSRHCHCDEGWAPPDCM. A helical membrane pass occupies residues 699 to 719; sequence GLLLSLLLLLVLVLLGASYWY. A phosphotyrosine; by HCK and LCK mark is found at tyrosine 717 and tyrosine 737. The Cytoplasmic segment spans residues 720–864; the sequence is RARLHQRLCQ…PPPAASSLYL (145 aa). The disordered stretch occupies residues 738–864; that stretch reads RAAQSGPPER…PPPAASSLYL (127 aa). The span at 753–765 shows a compositional bias: polar residues; sequence RAQQMPGTKQANV. Composition is skewed to pro residues over residues 768 to 780 and 810 to 825; these read PVPP…PNPV and PQGP…PLPA. An SH3-binding motif is present at residues 816–822; it reads PPPPRKP. Low complexity predominate over residues 826 to 850; the sequence is NPQGRPPLGDLPGPGDGSLQLVVPS. The SH3-binding signature appears at 851–857; sequence RPAPPPP.

Interacts with ITAGV-ITGB3 (vitronectin receptor). Interacts with SH3GL2 and SNX9; this interaction occurs preferentially with ADAM15 precursor, rather than the processed form, suggesting it occurs in a secretory pathway compartment prior to the medial Golgi. Interacts with ITAG9-ITGB1. Interacts specifically with Src family protein-tyrosine kinases (PTKs). Interacts with SH3PXD2A. Interacts with ITAGV-ITGB1. Interacts with GRB2, HCK, ITSN1, ITSN2, LYN, MAPK1, MAPK3, NCF1, NCK1, nephrocystin, PTK6, SNX33, LCK and SRC. Zn(2+) is required as a cofactor. Post-translationally, the precursor is cleaved by a furin endopeptidase. Phosphorylation increases association with PTKs. Predominantly expressed in brain, spinal cord, sciatic nerve and lung. Expressed at lower levels in all other tissues. In the peripheral nervous system, expressed predominantly by Schwann cells. In the central nervous system, preferentially expressed by neuronal cells.

It is found in the endomembrane system. It localises to the cell junction. The protein localises to the adherens junction. Its subcellular location is the cell projection. The protein resides in the cilium. It is found in the flagellum. It localises to the cytoplasmic vesicle. The protein localises to the secretory vesicle. Its subcellular location is the acrosome. Active metalloproteinase with gelatinolytic and collagenolytic activity. Plays a role in the wound healing process. Mediates both heterotypic intraepithelial cell/T-cell interactions and homotypic T-cell aggregation. Inhibits beta-1 integrin-mediated cell adhesion and migration of airway smooth muscle cells. Suppresses cell motility on or towards fibronectin possibly by driving alpha-v/beta-1 integrin (ITAGV-ITGB1) cell surface expression via ERK1/2 inactivation. Cleaves E-cadherin in response to growth factor deprivation. Plays a role in glomerular cell migration. Plays a role in pathological neovascularization. May play a role in cartilage remodeling. May be proteolytically processed, during sperm epididymal maturation and the acrosome reaction. May play a role in sperm-egg binding through its disintegrin domain. This chain is Disintegrin and metalloproteinase domain-containing protein 15 (Adam15), found in Rattus norvegicus (Rat).